Reading from the N-terminus, the 96-residue chain is Putative septation protein SpoVG (96 aa).

The protein belongs to the SpoVG family.

Its function is as follows. Could be involved in septation. The sequence is that of Putative septation protein SpoVG from Oceanobacillus iheyensis (strain DSM 14371 / CIP 107618 / JCM 11309 / KCTC 3954 / HTE831).